We begin with the raw amino-acid sequence, 134 residues long: Interferon-induced transmembrane protein 5 (134 aa).

The span at 1 to 20 shows a compositional bias: basic and acidic residues; it reads MDTSYPREDPRAPSSRKADA. Positions 1-31 are disordered; it reads MDTSYPREDPRAPSSRKADAAAHTALSMGTP. The Extracellular portion of the chain corresponds to 1–39; sequence MDTSYPREDPRAPSSRKADAAAHTALSMGTPGPTPRDHM. A helical membrane pass occupies residues 40 to 60; sequence LWSVFSTMYLNLCCLGFLALV. 3 S-palmitoyl cysteine lipidation sites follow: Cys52, Cys53, and Cys86. The Cytoplasmic portion of the chain corresponds to 61 to 88; sequence HSVKARDQKMAGNLEAARQYGSKAKCYN. A helical membrane pass occupies residues 89–109; sequence ILAAMWTLVPPLLLLGLVVTG. Residues 110-134 are Extracellular-facing; it reads ALHLSKLAKDSAAFFSTKFDEEDYN.

The protein belongs to the CD225/Dispanin family. Interacts with FKBP11. Palmitoylated. Detected in embryonic bone (at protein level). Highly expressed in osteoblasts of adults and embryos. Expressed in primitive hemopoietic cells.

It is found in the cell membrane. Functionally, required for normal bone mineralization. This Mus musculus (Mouse) protein is Interferon-induced transmembrane protein 5 (Ifitm5).